Reading from the N-terminus, the 714-residue chain is Fumarate reductase flavoprotein subunit (714 aa).

FAD is bound by residues 13–16, 42–44, and 49–50; these read GGLA, SHS, and GG. His-43 bears the Tele-8alpha-FAD histidine mark. Catalysis depends on residues His-257 and Arg-273. Residues Glu-420 and 436-437 each bind FAD; that span reads SV.

Belongs to the FAD-dependent oxidoreductase 2 family. FRD/SDH subfamily. In terms of assembly, part of an enzyme complex containing three subunits: a flavoprotein (frdA), an iron-sulfur protein (frdB), and diheme cytochrome b (frdC). The cofactor is FAD.

Its subcellular location is the cell inner membrane. The enzyme catalyses a quinone + succinate = fumarate + a quinol. Functionally, the fumarate reductase enzyme complex is required for fumarate respiration. In Helicobacter pylori (strain J99 / ATCC 700824) (Campylobacter pylori J99), this protein is Fumarate reductase flavoprotein subunit (frdA).